The chain runs to 383 residues: UDP-N-acetylglucosamine--N-acetylmuramyl-(pentapeptide) pyrophosphoryl-undecaprenol N-acetylglucosamine transferase (383 aa).

UDP-N-acetyl-alpha-D-glucosamine is bound by residues 10–12 (TGG), N124, R165, S190, I245, and Q290. The segment at 364-383 (PFGQAREPGQKPARPPDLAS) is disordered.

It belongs to the glycosyltransferase 28 family. MurG subfamily.

It is found in the cell inner membrane. The catalysed reaction is di-trans,octa-cis-undecaprenyl diphospho-N-acetyl-alpha-D-muramoyl-L-alanyl-D-glutamyl-meso-2,6-diaminopimeloyl-D-alanyl-D-alanine + UDP-N-acetyl-alpha-D-glucosamine = di-trans,octa-cis-undecaprenyl diphospho-[N-acetyl-alpha-D-glucosaminyl-(1-&gt;4)]-N-acetyl-alpha-D-muramoyl-L-alanyl-D-glutamyl-meso-2,6-diaminopimeloyl-D-alanyl-D-alanine + UDP + H(+). Its pathway is cell wall biogenesis; peptidoglycan biosynthesis. Cell wall formation. Catalyzes the transfer of a GlcNAc subunit on undecaprenyl-pyrophosphoryl-MurNAc-pentapeptide (lipid intermediate I) to form undecaprenyl-pyrophosphoryl-MurNAc-(pentapeptide)GlcNAc (lipid intermediate II). The chain is UDP-N-acetylglucosamine--N-acetylmuramyl-(pentapeptide) pyrophosphoryl-undecaprenol N-acetylglucosamine transferase from Anaeromyxobacter dehalogenans (strain 2CP-C).